Reading from the N-terminus, the 494-residue chain is MSKLLILLLLSLVASIFSTPLDDYVNAPDDTYKWTLNNTIEYETFTGYILELTSQTWMAEKSDWPVWKHWVSICVPKGVTTTTTFIYVDGGSNDNWKVPGSMDQTIEIVCLSSGSVSVGLTQIPNQPIIFNNDGVQRFEDDLVAYTWRQFLGNTSEPLWLARLPMTKAVVKCMDAVQEFGKTIGYNSENFVIAGASKRGWTTWLAGVVDPRIIAIVPIVMPILNMIPNMGHQFYAYGEWSFALNDYTGQGVMDYLNGPQMVELAAIVDPFSYRDRYTMPIYAIASSDDEFFLPDSPQFFWNNLTATPEKHLRIVPNAEHSLMGHQIDIILSIVTFVRLLITNQPRPTFTWDITYSEDLNSGTIVLTVPEGGIIPYKVKVWTAVTESTTRRDFRIITCMDITKCIQFIIWDPSDITPTSTGVYSITLSKPDAGWRAFFLEAEYLYAKNSIDDEYTLKFTSEVAIVPNTLPFGSCSEYNACGDGSQGDSASSTATL.

The signal sequence occupies residues 1 to 18 (MSKLLILLLLSLVASIFS). 3 N-linked (GlcNAc...) asparagine glycosylation sites follow: Asn-37, Asn-153, and Asn-302.

It belongs to the pqaA family. As to quaternary structure, interacts with cfaD.

Its subcellular location is the secreted. In terms of biological role, inhibitor that slows proliferation of secreting cells (also known as chalone). May function by binding to cell surface receptors. Requires cfaD for activity. Overexpression slows proliferation. The chain is Autocrine proliferation repressor protein A (aprA) from Dictyostelium discoideum (Social amoeba).